A 172-amino-acid chain; its full sequence is Cytidylate kinase (172 aa).

7–15 contributes to the ATP binding site; sequence GLAGTGTTT.

This sequence belongs to the cytidylate kinase family. Type 2 subfamily.

The protein resides in the cytoplasm. It catalyses the reaction CMP + ATP = CDP + ADP. It carries out the reaction dCMP + ATP = dCDP + ADP. The polypeptide is Cytidylate kinase (Methanobrevibacter smithii (strain ATCC 35061 / DSM 861 / OCM 144 / PS)).